Consider the following 328-residue polypeptide: MKRPKEPSGSDGESDGPIDVGQEGQLSQMARPLSTPSSSQMQARKKHRGIIEKRRRDRINSSLSELRRLVPTAFEKQGSSKLEKAEVLQMTVDHLKMLHATGGTGFFDARALAVDFRSIGFRECLTEVIRYLGVLEGPSSRADPVRIRLLSHLNSYAAEMEPSPTPTGPLAFPAWPWSFFHSCPGLPALSNQLAILGRVPSPVLPGVSSPAYPIPALRTAPLRRATGIILPARRNVLPSRGASSTRRARPLERPATPVPVAPSSRAARSSHIAPLLQSSSPTPPGPTGSAAYVAVPTPNSSSPGPAGRPAGAMLYHSWVSEITEIGAF.

A disordered region spans residues 1–57; sequence MKRPKEPSGSDGESDGPIDVGQEGQLSQMARPLSTPSSSQMQARKKHRGIIEKRRRD. Residues 24–42 are compositionally biased toward polar residues; that stretch reads GQLSQMARPLSTPSSSQMQ. The tract at residues 42-111 is transcriptional repression and interaction with NCOR1 and SIN3A; it reads QARKKHRGII…GGTGFFDARA (70 aa). Residues 43-98 enclose the bHLH domain; that stretch reads ARKKHRGIIEKRRRDRINSSLSELRRLVPTAFEKQGSSKLEKAEVLQMTVDHLKML. The Orange domain maps to 116 to 153; the sequence is FRSIGFRECLTEVIRYLGVLEGPSSRADPVRIRLLSHL. Positions 239-308 are disordered; sequence SRGASSTRRA…NSSSPGPAGR (70 aa). The segment covering 261-270 has biased composition (low complexity); sequence APSSRAARSS.

This sequence belongs to the HEY family. As to quaternary structure, self-associates. Interacts with GATA4, GATA6, HES1, HEY1 and HEY2. Interacts with HDAC1, NCOR1 and SIN3A.

Its subcellular location is the nucleus. Downstream effector of Notch signaling which may be required for cardiovascular development. Transcriptional repressor which binds preferentially to the canonical E box sequence 5'-CACGTG-3'. Represses transcription by the cardiac transcriptional activators GATA4 and GATA6. The sequence is that of Hairy/enhancer-of-split related with YRPW motif-like protein (HEYL) from Homo sapiens (Human).